A 70-amino-acid chain; its full sequence is DNA-directed RNA polymerase subunit omega (70 aa).

The protein belongs to the RNA polymerase subunit omega family. In terms of assembly, the RNAP catalytic core consists of 2 alpha, 1 beta, 1 beta' and 1 omega subunit. When a sigma factor is associated with the core the holoenzyme is formed, which can initiate transcription.

It carries out the reaction RNA(n) + a ribonucleoside 5'-triphosphate = RNA(n+1) + diphosphate. Promotes RNA polymerase assembly. Latches the N- and C-terminal regions of the beta' subunit thereby facilitating its interaction with the beta and alpha subunits. In Thermoanaerobacter pseudethanolicus (strain ATCC 33223 / 39E) (Clostridium thermohydrosulfuricum), this protein is DNA-directed RNA polymerase subunit omega.